A 130-amino-acid polypeptide reads, in one-letter code: uncharacterized protein (130 aa).

This is an uncharacterized protein from Saccharomyces cerevisiae (strain ATCC 204508 / S288c) (Baker's yeast).